Here is a 199-residue protein sequence, read N- to C-terminus: Ribonuclease HII (199 aa).

The RNase H type-2 domain occupies 9–198 (QFVAGVDEVG…VRAAIEQMNL (190 aa)). A divalent metal cation is bound by residues Asp-15, Glu-16, and Asp-107.

It belongs to the RNase HII family. The cofactor is Mn(2+). Requires Mg(2+) as cofactor.

It is found in the cytoplasm. The catalysed reaction is Endonucleolytic cleavage to 5'-phosphomonoester.. In terms of biological role, endonuclease that specifically degrades the RNA of RNA-DNA hybrids. The protein is Ribonuclease HII of Saccharophagus degradans (strain 2-40 / ATCC 43961 / DSM 17024).